The primary structure comprises 463 residues: Glutamate--tRNA ligase 1 (463 aa).

Residues 10–20 (PSPTGYLHIGG) carry the 'HIGH' region motif. The short motif at 238 to 242 (KLSKR) is the 'KMSKS' region element. Lys241 contributes to the ATP binding site.

The protein belongs to the class-I aminoacyl-tRNA synthetase family. Glutamate--tRNA ligase type 1 subfamily. Monomer.

It is found in the cytoplasm. The catalysed reaction is tRNA(Glu) + L-glutamate + ATP = L-glutamyl-tRNA(Glu) + AMP + diphosphate. In terms of biological role, catalyzes the attachment of glutamate to tRNA(Glu) in a two-step reaction: glutamate is first activated by ATP to form Glu-AMP and then transferred to the acceptor end of tRNA(Glu). In Helicobacter pylori (strain J99 / ATCC 700824) (Campylobacter pylori J99), this protein is Glutamate--tRNA ligase 1.